The primary structure comprises 78 residues: Large ribosomal subunit protein uL24 (78 aa).

It belongs to the universal ribosomal protein uL24 family. Part of the 50S ribosomal subunit.

In terms of biological role, one of two assembly initiator proteins, it binds directly to the 5'-end of the 23S rRNA, where it nucleates assembly of the 50S subunit. Functionally, one of the proteins that surrounds the polypeptide exit tunnel on the outside of the subunit. The sequence is that of Large ribosomal subunit protein uL24 from Helicobacter hepaticus (strain ATCC 51449 / 3B1).